The chain runs to 115 residues: Putative TGFB1-induced anti-apoptotic factor 1 (115 aa).

In terms of tissue distribution, not detectable in normal kidney and liver. Up-regulated in chronic and acute allograft rejection: expressed in the inflammatory infiltrate and in tubular epithelial cells.

Its subcellular location is the nucleus. Inhibits the cytotoxic effects of TNF-alpha and overexpressed TNF receptor adapters TRADD, FADD, and RIPK1. Involved in TGF-beta1 inhibition of IkappaB-alpha expression and suppression of TNF-mediated IkappaB-alpha degradation. The chain is Putative TGFB1-induced anti-apoptotic factor 1 (MYO18A) from Homo sapiens (Human).